The sequence spans 268 residues: Interleukin-2 receptor subunit alpha (268 aa).

A signal peptide spans 1-21 (MEPRLLMLGFLSLTIVPSCRA). The Sushi 1 domain occupies 22–79 (ELCLYDPPEVPNATFKALSYKNGTILNCECKRGFRRLKELVYMRCLGNSWSSNCQCTS). The Extracellular portion of the chain corresponds to 22–236 (ELCLYDPPEV…ETFVLTMEYK (215 aa)). Cystine bridges form between Cys24–Cys66, Cys49–Cys75, and Cys51–Cys77. Asn33 and Asn43 each carry an N-linked (GlcNAc...) asparagine glycan. Residues 86-109 (RKQVTAQLEHQKEQQTTTDMQKPT) are disordered. The segment covering 88–109 (QVTAQLEHQKEQQTTTDMQKPT) has biased composition (polar residues). An N-linked (GlcNAc...) asparagine glycan is attached at Asn116. Residues 119–182 (GHCREPPPWK…WTQPQLTCVD (64 aa)) enclose the Sushi 2 domain. 2 disulfides stabilise this stretch: Cys121/Cys164 and Cys148/Cys180. The segment at 189-219 (FLASEESQGSRNSSPESETSCPITTTDFPQP) is disordered. A compositionally biased stretch (polar residues) spans 193–211 (EESQGSRNSSPESETSCPI). The helical transmembrane segment at 237–257 (VAVASCLFLLISILLLSGLTW) threads the bilayer. Residues 258 to 268 (QHRWRKSRRTI) are Cytoplasmic-facing.

In terms of assembly, non-covalent dimer of an alpha and a beta subunit. IL2R exists in 3 different forms: a high affinity dimer, an intermediate affinity monomer (beta subunit), and a low affinity monomer (alpha subunit). The high and intermediate affinity forms also associate with a gamma subunit.

The protein localises to the membrane. In terms of biological role, receptor for interleukin-2. The receptor is involved in the regulation of immune tolerance by controlling regulatory T cells (TREGs) activity. TREGs suppress the activation and expansion of autoreactive T-cells. In Mus musculus (Mouse), this protein is Interleukin-2 receptor subunit alpha (Il2ra).